The chain runs to 548 residues: Chaperonin GroEL (548 aa).

Residues 29-32, lysine 50, 86-90, glycine 414, 478-480, and aspartate 494 contribute to the ATP site; these read TMGP, DGTTT, and NAA.

Belongs to the chaperonin (HSP60) family. As to quaternary structure, forms a cylinder of 14 subunits composed of two heptameric rings stacked back-to-back. Interacts with the co-chaperonin GroES.

It localises to the cytoplasm. The enzyme catalyses ATP + H2O + a folded polypeptide = ADP + phosphate + an unfolded polypeptide.. Its function is as follows. Together with its co-chaperonin GroES, plays an essential role in assisting protein folding. The GroEL-GroES system forms a nano-cage that allows encapsulation of the non-native substrate proteins and provides a physical environment optimized to promote and accelerate protein folding. This Legionella pneumophila (strain Paris) protein is Chaperonin GroEL.